The chain runs to 344 residues: N-acetyl-gamma-glutamyl-phosphate reductase (344 aa).

The active site involves cysteine 149.

Belongs to the NAGSA dehydrogenase family. Type 1 subfamily.

The protein resides in the cytoplasm. It carries out the reaction N-acetyl-L-glutamate 5-semialdehyde + phosphate + NADP(+) = N-acetyl-L-glutamyl 5-phosphate + NADPH + H(+). It functions in the pathway amino-acid biosynthesis; L-arginine biosynthesis; N(2)-acetyl-L-ornithine from L-glutamate: step 3/4. Its function is as follows. Catalyzes the NADPH-dependent reduction of N-acetyl-5-glutamyl phosphate to yield N-acetyl-L-glutamate 5-semialdehyde. This is N-acetyl-gamma-glutamyl-phosphate reductase from Thermoanaerobacter pseudethanolicus (strain ATCC 33223 / 39E) (Clostridium thermohydrosulfuricum).